Reading from the N-terminus, the 455-residue chain is Bifunctional protein GlmU (455 aa).

Residues 1-227 (MLTDIVILAA…ATEALGVNDP (227 aa)) are pyrophosphorylase. Residues 8–11 (LAAG), K22, Q73, 78–79 (GT), 100–102 (YGD), G137, E152, N167, and N225 contribute to the UDP-N-acetyl-alpha-D-glucosamine site. D102 provides a ligand contact to Mg(2+). Residue N225 coordinates Mg(2+). Residues 228–248 (VQLAILERVFQRQQLRALQMQ) are linker. An N-acetyltransferase region spans residues 249–455 (GLRVADPARV…HWQRPRRDKK (207 aa)). Positions 331 and 349 each coordinate UDP-N-acetyl-alpha-D-glucosamine. The Proton acceptor role is filled by H361. Y364 and N375 together coordinate UDP-N-acetyl-alpha-D-glucosamine. Residues A378, 384–385 (NY), S403, A421, and R438 each bind acetyl-CoA. The disordered stretch occupies residues 420-455 (GAGSTITKEVPPGGLTLSRSPQRTIPHWQRPRRDKK).

It in the N-terminal section; belongs to the N-acetylglucosamine-1-phosphate uridyltransferase family. The protein in the C-terminal section; belongs to the transferase hexapeptide repeat family. As to quaternary structure, homotrimer. Mg(2+) serves as cofactor.

It localises to the cytoplasm. The enzyme catalyses alpha-D-glucosamine 1-phosphate + acetyl-CoA = N-acetyl-alpha-D-glucosamine 1-phosphate + CoA + H(+). It carries out the reaction N-acetyl-alpha-D-glucosamine 1-phosphate + UTP + H(+) = UDP-N-acetyl-alpha-D-glucosamine + diphosphate. It functions in the pathway nucleotide-sugar biosynthesis; UDP-N-acetyl-alpha-D-glucosamine biosynthesis; N-acetyl-alpha-D-glucosamine 1-phosphate from alpha-D-glucosamine 6-phosphate (route II): step 2/2. The protein operates within nucleotide-sugar biosynthesis; UDP-N-acetyl-alpha-D-glucosamine biosynthesis; UDP-N-acetyl-alpha-D-glucosamine from N-acetyl-alpha-D-glucosamine 1-phosphate: step 1/1. It participates in bacterial outer membrane biogenesis; LPS lipid A biosynthesis. In terms of biological role, catalyzes the last two sequential reactions in the de novo biosynthetic pathway for UDP-N-acetylglucosamine (UDP-GlcNAc). The C-terminal domain catalyzes the transfer of acetyl group from acetyl coenzyme A to glucosamine-1-phosphate (GlcN-1-P) to produce N-acetylglucosamine-1-phosphate (GlcNAc-1-P), which is converted into UDP-GlcNAc by the transfer of uridine 5-monophosphate (from uridine 5-triphosphate), a reaction catalyzed by the N-terminal domain. The polypeptide is Bifunctional protein GlmU (Acidithiobacillus ferrooxidans (strain ATCC 23270 / DSM 14882 / CIP 104768 / NCIMB 8455) (Ferrobacillus ferrooxidans (strain ATCC 23270))).